The primary structure comprises 297 residues: Light-independent protochlorophyllide reductase iron-sulfur ATP-binding protein (297 aa).

Residues 41–46 (GIGKST) and K70 each bind ATP. S45 is a Mg(2+) binding site. [4Fe-4S] cluster contacts are provided by C126 and C160. Residues 211–212 (NR) and 235–237 (PDL) contribute to the ATP site.

This sequence belongs to the NifH/BchL/ChlL family. As to quaternary structure, homodimer. Protochlorophyllide reductase is composed of three subunits; BchL, BchN and BchB. [4Fe-4S] cluster is required as a cofactor.

The catalysed reaction is chlorophyllide a + oxidized 2[4Fe-4S]-[ferredoxin] + 2 ADP + 2 phosphate = protochlorophyllide a + reduced 2[4Fe-4S]-[ferredoxin] + 2 ATP + 2 H2O. It functions in the pathway porphyrin-containing compound metabolism; bacteriochlorophyll biosynthesis (light-independent). Its function is as follows. Component of the dark-operative protochlorophyllide reductase (DPOR) that uses Mg-ATP and reduced ferredoxin to reduce ring D of protochlorophyllide (Pchlide) to form chlorophyllide a (Chlide). This reaction is light-independent. The L component serves as a unique electron donor to the NB-component of the complex, and binds Mg-ATP. The chain is Light-independent protochlorophyllide reductase iron-sulfur ATP-binding protein from Cereibacter sphaeroides (strain ATCC 17025 / ATH 2.4.3) (Rhodobacter sphaeroides).